Reading from the N-terminus, the 321-residue chain is Phospho-N-acetylmuramoyl-pentapeptide-transferase (321 aa).

A run of 10 helical transmembrane segments spans residues Met-1–Ile-21, Met-50–Val-70, Ile-76–Ile-96, Phe-112–Val-132, Ile-140–Trp-160, Gly-176–Leu-196, Ala-200–Ile-220, Val-225–Met-245, Leu-250–Val-270, and Val-300–Val-320.

This sequence belongs to the glycosyltransferase 4 family. MraY subfamily. It depends on Mg(2+) as a cofactor.

It localises to the cell membrane. The catalysed reaction is UDP-N-acetyl-alpha-D-muramoyl-L-alanyl-gamma-D-glutamyl-L-lysyl-D-alanyl-D-alanine + di-trans,octa-cis-undecaprenyl phosphate = Mur2Ac(oyl-L-Ala-gamma-D-Glu-L-Lys-D-Ala-D-Ala)-di-trans,octa-cis-undecaprenyl diphosphate + UMP. Its pathway is cell wall biogenesis; peptidoglycan biosynthesis. Its function is as follows. Catalyzes the initial step of the lipid cycle reactions in the biosynthesis of the cell wall peptidoglycan: transfers peptidoglycan precursor phospho-MurNAc-pentapeptide from UDP-MurNAc-pentapeptide onto the lipid carrier undecaprenyl phosphate, yielding undecaprenyl-pyrophosphoryl-MurNAc-pentapeptide, known as lipid I. In Staphylococcus aureus (strain MSSA476), this protein is Phospho-N-acetylmuramoyl-pentapeptide-transferase.